The sequence spans 211 residues: Pyridoxine/pyridoxamine 5'-phosphate oxidase (211 aa).

Substrate-binding positions include 7-10 (RREY) and Lys65. Residues 60 to 65 (RIVLLK), 75 to 76 (YT), Arg81, Lys82, and Gln104 contribute to the FMN site. Residues Tyr122, Arg126, and Ser130 each coordinate substrate. Residues 139–140 (QS) and Trp184 contribute to the FMN site. 190 to 192 (RLH) is a substrate binding site. Residue Arg194 coordinates FMN.

This sequence belongs to the pyridoxamine 5'-phosphate oxidase family. Homodimer. FMN serves as cofactor.

The catalysed reaction is pyridoxamine 5'-phosphate + O2 + H2O = pyridoxal 5'-phosphate + H2O2 + NH4(+). It catalyses the reaction pyridoxine 5'-phosphate + O2 = pyridoxal 5'-phosphate + H2O2. It functions in the pathway cofactor metabolism; pyridoxal 5'-phosphate salvage; pyridoxal 5'-phosphate from pyridoxamine 5'-phosphate: step 1/1. It participates in cofactor metabolism; pyridoxal 5'-phosphate salvage; pyridoxal 5'-phosphate from pyridoxine 5'-phosphate: step 1/1. Catalyzes the oxidation of either pyridoxine 5'-phosphate (PNP) or pyridoxamine 5'-phosphate (PMP) into pyridoxal 5'-phosphate (PLP). The chain is Pyridoxine/pyridoxamine 5'-phosphate oxidase from Vibrio campbellii (strain ATCC BAA-1116).